The sequence spans 146 residues: Small RNA-binding protein 11, chloroplastic (146 aa).

The N-terminal 31 residues, 1 to 31 (MAALARIGGRHLKSVCLINSSASCFFTQRRG), are a transit peptide targeting the chloroplast. One can recognise an RRM domain in the interval 34–112 (SKLFIGGLSF…RTIFVDYAKA (79 aa)). Serine 42 is subject to Phosphoserine.

In terms of tissue distribution, expressed in rosette leaves, cauline leaves, stems and flowers.

It is found in the plastid. It localises to the chloroplast. Probable RNA-binding protein that may be involved in salt and oxidative stress tolerance. The chain is Small RNA-binding protein 11, chloroplastic from Arabidopsis thaliana (Mouse-ear cress).